The sequence spans 155 residues: MLP-like protein 423 (155 aa).

Belongs to the MLP family.

The polypeptide is MLP-like protein 423 (MLP423) (Arabidopsis thaliana (Mouse-ear cress)).